The sequence spans 727 residues: DNA topoisomerase 3 (727 aa).

The Toprim domain occupies 3–136 (KTVVLAEKPS…LKRLWISSVT (134 aa)). Residues Glu-9 and Asp-105 each contribute to the Mg(2+) site. In terms of domain architecture, Topo IA-type catalytic spans 153-592 (FENLYHSAVA…EMKEYAKQTI (440 aa)). Positions 187–192 (SCGRVQ) are interaction with DNA. Tyr-310 serves as the catalytic O-(5'-phospho-DNA)-tyrosine intermediate. Residues 685–711 (RRAKDKNSKASKRDVHSYMKKQNKDEP) show a composition bias toward basic and acidic residues. Positions 685-713 (RRAKDKNSKASKRDVHSYMKKQNKDEPIN) are disordered.

The protein belongs to the type IA topoisomerase family. Mg(2+) is required as a cofactor.

The catalysed reaction is ATP-independent breakage of single-stranded DNA, followed by passage and rejoining.. In terms of biological role, releases the supercoiling and torsional tension of DNA, which is introduced during the DNA replication and transcription, by transiently cleaving and rejoining one strand of the DNA duplex. Introduces a single-strand break via transesterification at a target site in duplex DNA. The scissile phosphodiester is attacked by the catalytic tyrosine of the enzyme, resulting in the formation of a DNA-(5'-phosphotyrosyl)-enzyme intermediate and the expulsion of a 3'-OH DNA strand. The free DNA strand then undergoes passage around the unbroken strand, thus removing DNA supercoils. Finally, in the religation step, the DNA 3'-OH attacks the covalent intermediate to expel the active-site tyrosine and restore the DNA phosphodiester backbone. The protein is DNA topoisomerase 3 of Bacillus licheniformis (strain ATCC 14580 / DSM 13 / JCM 2505 / CCUG 7422 / NBRC 12200 / NCIMB 9375 / NCTC 10341 / NRRL NRS-1264 / Gibson 46).